A 115-amino-acid polypeptide reads, in one-letter code: Ribosome-binding factor A (115 aa).

The protein belongs to the RbfA family. In terms of assembly, monomer. Binds 30S ribosomal subunits, but not 50S ribosomal subunits or 70S ribosomes.

It is found in the cytoplasm. Functionally, one of several proteins that assist in the late maturation steps of the functional core of the 30S ribosomal subunit. Associates with free 30S ribosomal subunits (but not with 30S subunits that are part of 70S ribosomes or polysomes). Required for efficient processing of 16S rRNA. May interact with the 5'-terminal helix region of 16S rRNA. The sequence is that of Ribosome-binding factor A from Streptococcus gordonii (strain Challis / ATCC 35105 / BCRC 15272 / CH1 / DL1 / V288).